Here is a 257-residue protein sequence, read N- to C-terminus: Protein MoaE (257 aa).

6–29 contributes to the NAD(+) binding site; sequence VITGGGTGIGAACARLMHPAGERV. Residues 75 to 96 are disordered; it reads LMSSSAAPAGWATAPPPRPATA. Ser132 is a binding site for substrate. Tyr145 acts as the Proton acceptor in catalysis.

This sequence belongs to the short-chain dehydrogenases/reductases (SDR) family.

Functionally, might catalyze the conversion of monoamine compounds or their metabolites. The chain is Protein MoaE (moaE) from Klebsiella aerogenes (Enterobacter aerogenes).